The primary structure comprises 377 residues: uncharacterized protein (377 aa).

A run of 2 helical transmembrane segments spans residues 23–43 (LKFILIILVVVIVGLLAFIAY) and 251–271 (GSFITYGIIDSSYVILSSISY).

The protein resides in the cell membrane. This is an uncharacterized protein from Methanocaldococcus jannaschii (strain ATCC 43067 / DSM 2661 / JAL-1 / JCM 10045 / NBRC 100440) (Methanococcus jannaschii).